The primary structure comprises 95 residues: Antitoxin VapB (95 aa).

Its function is as follows. Antitoxin component of a type II toxin-antitoxin (TA) system. Partially neutralizes the RNase activity of cognate toxin VapC. In Rickettsia bellii (strain RML369-C), this protein is Antitoxin VapB.